The following is a 523-amino-acid chain: Calcium-dependent protein kinase 28 (523 aa).

Residue Gly-2 is the site of N-myristoyl glycine attachment. Cys-4 carries the S-palmitoyl cysteine lipid modification. The disordered stretch occupies residues 15–43 (SSRRSSQTKSKAAPTPIDTKASTKRRTGS). One can recognise a Protein kinase domain in the interval 62–322 (YTIGKLLGHG…AAQALSHAWV (261 aa)). Residues 68-76 (LGHGQFGYT) and Lys-91 each bind ATP. The active-site Proton acceptor is the Asp-188. Residues Ser-228 and Ser-318 each carry the phosphoserine modification. The autoinhibitory domain stretch occupies residues 328-358 (ATDIPVDISVLNNLRQFVRYSRLKQFALRAL). EF-hand domains lie at 365–400 (AEIS…DLPW), 402–437 (LKDS…VHQL), 444–479 (KWQL…RGSI), and 482–509 (LLDE…ASIS). Ca(2+) contacts are provided by Asp-378, Asp-380, Asn-382, Glu-389, Asp-415, Asn-417, Asp-419, Glu-426, Asp-457, Asp-459, Asp-461, Tyr-463, Glu-468, Asp-487, Asp-489, Asp-491, and Lys-493. Ser-495 carries the post-translational modification Phosphoserine. A Ca(2+)-binding site is contributed by Glu-498. Ser-515 bears the Phosphoserine mark.

The protein belongs to the protein kinase superfamily. Ser/Thr protein kinase family. CDPK subfamily. In terms of assembly, interacts with BIK1. In terms of tissue distribution, expressed in vascular and meristematic tissues throughout plant development.

It localises to the cell membrane. The enzyme catalyses L-seryl-[protein] + ATP = O-phospho-L-seryl-[protein] + ADP + H(+). The catalysed reaction is L-threonyl-[protein] + ATP = O-phospho-L-threonyl-[protein] + ADP + H(+). Activated by calcium. Autophosphorylation plays an important role in the regulation of the kinase activity. In terms of biological role, may play a role in signal transduction pathways that involve calcium as a second messenger. Acts as a developmentally controlled regulator for coordinated stem elongation and vascular development. Acts as a key component which contributes to the developmental switch that establishes the transition from vegetative to reproductive growth. Involved in pathogen-associated molecular pattern (PAMP)-triggered immunity (PTI) signaling. Interacts with and phosphorylates the kinase BIK1, a central rate-limiting kinase in PTI signaling. Facilitates BIK1 turnover and negatively regulates BIK1-mediated immune responses triggered by several PAMPs. Its kinase activity is necessary and sufficient for its function in PTI signaling. This is Calcium-dependent protein kinase 28 from Arabidopsis thaliana (Mouse-ear cress).